Here is a 370-residue protein sequence, read N- to C-terminus: Cytochrome b (370 aa).

Helical transmembrane passes span 30–50 (FGSM…FLAF), 74–96 (WIFR…LHIF), 109–129 (VWMS…MGYV), and 175–195 (FFVL…GHLI). 2 residues coordinate heme b: H80 and H94. Heme b contacts are provided by H179 and H193. H198 serves as a coordination point for a ubiquinone. The next 4 helical transmembrane spans lie at 221–240 (YIGK…VLSL), 284–304 (VLGV…ALVN), 316–336 (FLVF…QCMV), and 342–362 (VLSP…LGIF).

Belongs to the cytochrome b family. As to quaternary structure, the main subunits of complex b-c1 are: cytochrome b, cytochrome c1 and the Rieske protein. Heme b is required as a cofactor.

It is found in the mitochondrion inner membrane. Its function is as follows. Component of the ubiquinol-cytochrome c reductase complex (complex III or cytochrome b-c1 complex) that is part of the mitochondrial respiratory chain. The b-c1 complex mediates electron transfer from ubiquinol to cytochrome c. Contributes to the generation of a proton gradient across the mitochondrial membrane that is then used for ATP synthesis. In Caenorhabditis briggsae, this protein is Cytochrome b (ctb-1).